We begin with the raw amino-acid sequence, 562 residues long: NRAMP-like transporter smf-1 (562 aa).

Topologically, residues Met1–Lys55 are cytoplasmic. A helical membrane pass occupies residues Leu56–Ile76. Residues Glu77–Gly83 are Extracellular-facing. A helical membrane pass occupies residues Ala84–Leu104. At Gln105–Glu140 the chain is on the cytoplasmic side. The chain crosses the membrane as a helical span at residues Ile141–Leu161. Topologically, residues Ser162–Gly164 are extracellular. A helical transmembrane segment spans residues Phe165–Ile185. At Asp186 to Glu194 the chain is on the cytoplasmic side. Residues Leu195–Val215 form a helical membrane-spanning segment. Residues Lys216 to Gln241 are Extracellular-facing. A helical membrane pass occupies residues Ala242–Val262. At Lys263–Ala287 the chain is on the cytoplasmic side. Residues Ile288–Leu308 traverse the membrane as a helical segment. At Tyr309–Gly347 the chain is on the extracellular side. A glycan (N-linked (GlcNAc...) asparagine) is linked at Asn334. The chain crosses the membrane as a helical span at residues Ile348–Ala368. The Cytoplasmic portion of the chain corresponds to Ala369–Arg398. A helical membrane pass occupies residues Val399–Gly419. At Val420 to Asp428 the chain is on the extracellular side. A glycan (N-linked (GlcNAc...) asparagine) is linked at Asn422. A helical membrane pass occupies residues Phe429–Thr449. Over Ser450 to Lys462 the chain is Cytoplasmic. The chain crosses the membrane as a helical span at residues Val463–Ile483. Residues Ser484–Tyr496 are Extracellular-facing. The helical transmembrane segment at Ile497–Leu517 threads the bilayer. Over Tyr518 to Gln562 the chain is Cytoplasmic.

The protein belongs to the NRAMP family. Expressed in dopaminergic neurons (at protein level). Expressed predominantly in anterior and posterior intestine, rectal gland cell, H-shaped excretory cell, vulva cells, proximal uterus and spermatheca in adults. Weakly expressed in hyp7 hypodermis, pharyngeal muscles and some anterior sensory, ring and posterior head neurons in adults. Expressed in the anchor cell at the larval stage.

Its subcellular location is the apical cell membrane. The protein localises to the cytoplasmic vesicle membrane. In terms of biological role, probable divalent metal ion transporter which regulates Mn(2+) uptake. This chain is NRAMP-like transporter smf-1 (smf-1), found in Caenorhabditis elegans.